Reading from the N-terminus, the 66-residue chain is MKASDVRALTADQLKDELAKLKKEQFNLRFQKATGQLEKSSRINEVRKDIARVKTIARQKAAEVKA.

The protein belongs to the universal ribosomal protein uL29 family.

The chain is Large ribosomal subunit protein uL29 from Rhizobium etli (strain CIAT 652).